The following is a 120-amino-acid chain: Large ribosomal subunit protein uL22 (120 aa).

The interval 1–25 is disordered; sequence MFVNKKYTAKGKNLPSSPKKVRPIA.

It belongs to the universal ribosomal protein uL22 family. Part of the 50S ribosomal subunit.

Its function is as follows. This protein binds specifically to 23S rRNA; its binding is stimulated by other ribosomal proteins, e.g. L4, L17, and L20. It is important during the early stages of 50S assembly. It makes multiple contacts with different domains of the 23S rRNA in the assembled 50S subunit and ribosome. The globular domain of the protein is located near the polypeptide exit tunnel on the outside of the subunit, while an extended beta-hairpin is found that lines the wall of the exit tunnel in the center of the 70S ribosome. The protein is Large ribosomal subunit protein uL22 of Borrelia recurrentis (strain A1).